Here is a 264-residue protein sequence, read N- to C-terminus: Small ribosomal subunit protein uS3 (264 aa).

The KH type-2 domain occupies 39–107 (VREYLKKKLK…PVHVNIEEIR (69 aa)). A disordered region spans residues 217-264 (EEVAEEKRPRRNARPGDRRPRRDGEGAPAGARRGAPRRGGAGDGKTGE). The span at 230-241 (RPGDRRPRRDGE) shows a compositional bias: basic and acidic residues. Positions 253–264 (RRGGAGDGKTGE) are enriched in gly residues.

This sequence belongs to the universal ribosomal protein uS3 family. Part of the 30S ribosomal subunit. Forms a tight complex with proteins S10 and S14.

Its function is as follows. Binds the lower part of the 30S subunit head. Binds mRNA in the 70S ribosome, positioning it for translation. This Paraburkholderia phymatum (strain DSM 17167 / CIP 108236 / LMG 21445 / STM815) (Burkholderia phymatum) protein is Small ribosomal subunit protein uS3.